Reading from the N-terminus, the 376-residue chain is Flap endonuclease 1 (376 aa).

Residues Met-1–Ala-105 are N-domain. Residue Asp-34 coordinates Mg(2+). DNA-binding residues include Arg-47 and Arg-71. The Mg(2+) site is built by Asp-87, Glu-159, Glu-161, Asp-180, and Asp-182. The I-domain stretch occupies residues Gln-123–Tyr-254. Glu-159 is a DNA binding site. Residues Gly-232 and Asp-234 each coordinate DNA. Asp-234 is a Mg(2+) binding site. The tract at residues Ala-336 to Phe-344 is interaction with PCNA. A disordered region spans residues Ser-352–Lys-376. The segment covering Val-360–Lys-376 has biased composition (basic residues).

Belongs to the XPG/RAD2 endonuclease family. FEN1 subfamily. In terms of assembly, interacts with PCNA. Three molecules of FEN1 bind to one PCNA trimer with each molecule binding to one PCNA monomer. PCNA stimulates the nuclease activity without altering cleavage specificity. Requires Mg(2+) as cofactor. In terms of processing, phosphorylated. Phosphorylation upon DNA damage induces relocalization to the nuclear plasma.

It is found in the nucleus. The protein resides in the nucleolus. It localises to the nucleoplasm. The protein localises to the mitochondrion. Structure-specific nuclease with 5'-flap endonuclease and 5'-3' exonuclease activities involved in DNA replication and repair. During DNA replication, cleaves the 5'-overhanging flap structure that is generated by displacement synthesis when DNA polymerase encounters the 5'-end of a downstream Okazaki fragment. It enters the flap from the 5'-end and then tracks to cleave the flap base, leaving a nick for ligation. Also involved in the long patch base excision repair (LP-BER) pathway, by cleaving within the apurinic/apyrimidinic (AP) site-terminated flap. Acts as a genome stabilization factor that prevents flaps from equilibrating into structures that lead to duplications and deletions. Also possesses 5'-3' exonuclease activity on nicked or gapped double-stranded DNA, and exhibits RNase H activity. Also involved in replication and repair of rDNA and in repairing mitochondrial DNA. The polypeptide is Flap endonuclease 1 (Entamoeba dispar (strain ATCC PRA-260 / SAW760)).